The chain runs to 140 residues: Protein SNA4 (140 aa).

Residues 1-8 are Cytoplasmic-facing; sequence MCCYCVCC. Residues Cys2, Cys3, Cys5, Cys7, and Cys8 are each lipidated (S-palmitoyl cysteine). The helical transmembrane segment at 9–29 threads the bilayer; sequence TVSDFILYIVAFFFPPAAVLL. At 30 to 41 the chain is on the vacuolar side; it reads RSGPCSSDFLLN. The chain crosses the membrane as a helical span at residues 42–62; that stretch reads VLLTLLGFLPGMLHAFYYITI. Over 63–140 the chain is Cytoplasmic; the sequence is TSPLRNAEYV…LVESPPPYVP (78 aa). The disordered stretch occupies residues 84–140; that stretch reads RNVPSNRPQNSQTPQNRPQQGSSARNVYPSVETPLLQGAAPHDNKQSLVESPPPYVP. The span at 85-108 shows a compositional bias: polar residues; that stretch reads NVPSNRPQNSQTPQNRPQQGSSAR. Residue Lys128 forms a Glycyl lysine isopeptide (Lys-Gly) (interchain with G-Cter in ubiquitin) linkage. Phosphoserine is present on Ser134.

Belongs to the UPF0057 (PMP3) family.

The protein resides in the vacuole membrane. This is Protein SNA4 (SNA4) from Saccharomyces cerevisiae (strain ATCC 204508 / S288c) (Baker's yeast).